The primary structure comprises 259 residues: Deoxyribose-phosphate aldolase (259 aa).

Asp102 acts as the Proton donor/acceptor in catalysis. Catalysis depends on Lys167, which acts as the Schiff-base intermediate with acetaldehyde. Catalysis depends on Lys201, which acts as the Proton donor/acceptor.

Belongs to the DeoC/FbaB aldolase family. DeoC type 2 subfamily.

The protein localises to the cytoplasm. The catalysed reaction is 2-deoxy-D-ribose 5-phosphate = D-glyceraldehyde 3-phosphate + acetaldehyde. It functions in the pathway carbohydrate degradation; 2-deoxy-D-ribose 1-phosphate degradation; D-glyceraldehyde 3-phosphate and acetaldehyde from 2-deoxy-alpha-D-ribose 1-phosphate: step 2/2. In terms of biological role, catalyzes a reversible aldol reaction between acetaldehyde and D-glyceraldehyde 3-phosphate to generate 2-deoxy-D-ribose 5-phosphate. This is Deoxyribose-phosphate aldolase from Erwinia tasmaniensis (strain DSM 17950 / CFBP 7177 / CIP 109463 / NCPPB 4357 / Et1/99).